The following is a 180-amino-acid chain: UPF0227 protein VV2369 (180 aa).

Belongs to the UPF0227 family.

The sequence is that of UPF0227 protein VV2369 from Vibrio vulnificus (strain YJ016).